The chain runs to 182 residues: uncharacterized protein (182 aa).

A Macro domain is found at 1–170; that stretch reads MIVKIIKGDI…IFVNIFEREL (170 aa).

This is an uncharacterized protein from Sulfurisphaera tokodaii (strain DSM 16993 / JCM 10545 / NBRC 100140 / 7) (Sulfolobus tokodaii).